The following is a 1284-amino-acid chain: DNA-directed RNA polymerase subunit beta (1284 aa).

The protein belongs to the RNA polymerase beta chain family. As to quaternary structure, the RNAP catalytic core consists of 2 alpha, 1 beta, 1 beta' and 1 omega subunit. When a sigma factor is associated with the core the holoenzyme is formed, which can initiate transcription.

It catalyses the reaction RNA(n) + a ribonucleoside 5'-triphosphate = RNA(n+1) + diphosphate. Functionally, DNA-dependent RNA polymerase catalyzes the transcription of DNA into RNA using the four ribonucleoside triphosphates as substrates. In Mesoplasma florum (strain ATCC 33453 / NBRC 100688 / NCTC 11704 / L1) (Acholeplasma florum), this protein is DNA-directed RNA polymerase subunit beta.